Consider the following 96-residue polypeptide: MKCFAQIVVLLLVIAFSHGAVITGACDKDVQCGSGTCCAASAWSRNIRFCIPLGNSGEDCHPASHKVPYDGKRLSSLCPCKSGLTCSKSGEKFKCS.

The first 19 residues, 1 to 19 (MKCFAQIVVLLLVIAFSHG), serve as a signal peptide directing secretion. The interval 20–24 (AVITG) is may be important for binding to prokineticin receptor 2. 5 cysteine pairs are disulfide-bonded: Cys26–Cys38, Cys32–Cys50, Cys37–Cys78, Cys60–Cys86, and Cys80–Cys95.

In terms of tissue distribution, expressed by the skin glands.

Its subcellular location is the secreted. Functionally, potent agonist for both PKR1/PROKR1 and PKR2/PROKR2, and inducer of a potent and long-lasting hyperalgesia. Shows an EC(50) of 0.264 nM, when tested on neuroblastoma cells (SH-SY5Y) which endogenously express mainly PKR2/PROKR2. Also potentiates capsaicin-induced TRPV1 current, when tested on DRG neurons. Induces a biphasic hyperalgesia to tactile and thermal stimuli after systemic injection of this protein into rat. The initial phase of hyperalgesia is caused by a local action on nociceptors, because intraplantar injection of this protein causes a strong and localized hyperalgesia with a similar time course to that of the initial phase of hyperalgesia seen with systemic injection. The secondary phase of hyperalgesia is not seen with local intraplantar injection and is therefore probably attributable to a central action of this protein. At subnanomolar concentrations, this protein both induces potent chemotaxis of macrophages and stimulates LPS-induced production of the pro-inflammatory cytokines IL-1 and IL-12. In vivo, this protein potently stimulates the contraction of the guinea-pig gastrointestinal (GI) smooth muscle (at nanomolar concentration). The chain is Prokineticin Bv8 from Bombina variegata (Yellow-bellied toad).